A 70-amino-acid polypeptide reads, in one-letter code: MLSLRPALRLLQAPLRCWAVPKAHVSAKPAETPTSPAEQAVGLSFIFITFLGPAGWILSHVENYKKRPRA.

The N-terminal 24 residues, 1–24 (MLSLRPALRLLQAPLRCWAVPKAH), are a transit peptide targeting the mitochondrion. The Mitochondrial matrix segment spans residues 25–35 (VSAKPAETPTS). A helical membrane pass occupies residues 36–59 (PAEQAVGLSFIFITFLGPAGWILS). At 60-70 (HVENYKKRPRA) the chain is on the mitochondrial intermembrane side.

Belongs to the cytochrome c oxidase VIII family. As to quaternary structure, component of the cytochrome c oxidase (complex IV, CIV), a multisubunit enzyme composed of 14 subunits. The complex is composed of a catalytic core of 3 subunits MT-CO1, MT-CO2 and MT-CO3, encoded in the mitochondrial DNA, and 11 supernumerary subunits COX4I, COX5A, COX5B, COX6A, COX6B, COX6C, COX7A, COX7B, COX7C, COX8 and NDUFA4, which are encoded in the nuclear genome. The complex exists as a monomer or a dimer and forms supercomplexes (SCs) in the inner mitochondrial membrane with NADH-ubiquinone oxidoreductase (complex I, CI) and ubiquinol-cytochrome c oxidoreductase (cytochrome b-c1 complex, complex III, CIII), resulting in different assemblies (supercomplex SCI(1)III(2)IV(1) and megacomplex MCI(2)III(2)IV(2)).

It localises to the mitochondrion inner membrane. It participates in energy metabolism; oxidative phosphorylation. Component of the cytochrome c oxidase, the last enzyme in the mitochondrial electron transport chain which drives oxidative phosphorylation. The respiratory chain contains 3 multisubunit complexes succinate dehydrogenase (complex II, CII), ubiquinol-cytochrome c oxidoreductase (cytochrome b-c1 complex, complex III, CIII) and cytochrome c oxidase (complex IV, CIV), that cooperate to transfer electrons derived from NADH and succinate to molecular oxygen, creating an electrochemical gradient over the inner membrane that drives transmembrane transport and the ATP synthase. Cytochrome c oxidase is the component of the respiratory chain that catalyzes the reduction of oxygen to water. Electrons originating from reduced cytochrome c in the intermembrane space (IMS) are transferred via the dinuclear copper A center (CU(A)) of subunit 2 and heme A of subunit 1 to the active site in subunit 1, a binuclear center (BNC) formed by heme A3 and copper B (CU(B)). The BNC reduces molecular oxygen to 2 water molecules using 4 electrons from cytochrome c in the IMS and 4 protons from the mitochondrial matrix. This is Cytochrome c oxidase subunit 8B, mitochondrial (COX8B) from Ateles belzebuth (White-bellied spider monkey).